Here is a 445-residue protein sequence, read N- to C-terminus: Trigger factor (445 aa).

In terms of domain architecture, PPIase FKBP-type spans 168–253; sequence GDAVIVDFVG…IHEVRAPQTP (86 aa).

It belongs to the FKBP-type PPIase family. Tig subfamily.

It localises to the cytoplasm. The catalysed reaction is [protein]-peptidylproline (omega=180) = [protein]-peptidylproline (omega=0). In terms of biological role, involved in protein export. Acts as a chaperone by maintaining the newly synthesized protein in an open conformation. Functions as a peptidyl-prolyl cis-trans isomerase. This is Trigger factor from Hyphomonas neptunium (strain ATCC 15444).